We begin with the raw amino-acid sequence, 555 residues long: Formate--tetrahydrofolate ligase (555 aa).

Residue 64–71 (TPAGEGKT) coordinates ATP.

This sequence belongs to the formate--tetrahydrofolate ligase family.

It carries out the reaction (6S)-5,6,7,8-tetrahydrofolate + formate + ATP = (6R)-10-formyltetrahydrofolate + ADP + phosphate. It participates in one-carbon metabolism; tetrahydrofolate interconversion. This Dinoroseobacter shibae (strain DSM 16493 / NCIMB 14021 / DFL 12) protein is Formate--tetrahydrofolate ligase.